Here is a 430-residue protein sequence, read N- to C-terminus: MVSVDPLATERWRSIRRLTDRDSAYKVPWFVPGPENFEALQNTKILVIGAGGLGCELLKNLALSGFRTIEVIDMDTIDVSNLNRQFLFRESDVGKSKAEVAAAFVQQRVVGCQVTAHNCRIEDKGQEFYRKFSIIICGLDSIPARRWINGMLCDLVLEMADGKPDENTIIPMIDGGTEGFKGNARVIYPKFTACIDCTLDLYPPQVNFPLCTIAHTPRLPEHCIEYIKVVVWPEEKPFEGVSLDADDPIHVEWVLERASLRAEKYNIRGVDRRLTSGVLKRIIPAVASTNAVIAASCALEALKLATNIAKPIDNYLNFTQIHGAYTSVVSMMKDDNCLTCSGGRLPFEVSPSSTLESLIIRLSERFHLKHPTLATSTRKLYCISSFMPQFEQESKENLHTSMKDLVSDGEEILVSDEALSRALTLRIQLI.

G52–T76 is an ATP binding site. C211 serves as the catalytic Glycyl thioester intermediate.

This sequence belongs to the ubiquitin-activating E1 family. UBA3 subfamily. Heterodimer of uba-3 and ula-1. Interacts with NEDD8 and ubc-12. Expressed in intestine, vulva epithelium and head and tail neurons.

The protein resides in the nucleus. The protein localises to the cytoplasm. It carries out the reaction ATP + [NEDD8 protein] + [E1 NEDD8-activating enzyme]-L-cysteine = AMP + diphosphate + [E1 NEDD8-activating enzyme]-S-[NEDD8 protein]-yl-L-cysteine.. The protein operates within protein modification; protein neddylation. In terms of biological role, catalytic subunit of the dimeric rfl-1 (uba-3)-ula-1 E1 enzyme. E1 activates NEDD8 by first adenylating its C-terminal glycine residue with ATP, thereafter linking this residue to the side chain of the catalytic cysteine, yielding a NEDD8-uba-3 thioester and free AMP. E1 finally transfers NEDD8 to the catalytic cysteine of ubc-12. Required for cytokinesis and mitotic spindle orientation during early embryogenesis. This Caenorhabditis elegans protein is NEDD8-activating enzyme E1 catalytic subunit.